A 332-amino-acid polypeptide reads, in one-letter code: Ketol-acid reductoisomerase (NADP(+)) (332 aa).

Positions 5–185 (VKVYYDDEVS…GCTRAGVIET (181 aa)) constitute a KARI N-terminal Rossmann domain. NADP(+) is bound by residues 28–31 (YGNQ), R51, S56, and 86–89 (DLVQ). Residue H111 is part of the active site. Residue G137 coordinates NADP(+). In terms of domain architecture, KARI C-terminal knotted spans 186 to 331 (TFKDETESDL…RFIRKMSGLE (146 aa)). D194, E198, E230, and E234 together coordinate Mg(2+). S255 is a binding site for substrate.

Belongs to the ketol-acid reductoisomerase family. Mg(2+) is required as a cofactor.

The enzyme catalyses (2R)-2,3-dihydroxy-3-methylbutanoate + NADP(+) = (2S)-2-acetolactate + NADPH + H(+). It catalyses the reaction (2R,3R)-2,3-dihydroxy-3-methylpentanoate + NADP(+) = (S)-2-ethyl-2-hydroxy-3-oxobutanoate + NADPH + H(+). Its pathway is amino-acid biosynthesis; L-isoleucine biosynthesis; L-isoleucine from 2-oxobutanoate: step 2/4. The protein operates within amino-acid biosynthesis; L-valine biosynthesis; L-valine from pyruvate: step 2/4. Functionally, involved in the biosynthesis of branched-chain amino acids (BCAA). Catalyzes an alkyl-migration followed by a ketol-acid reduction of (S)-2-acetolactate (S2AL) to yield (R)-2,3-dihydroxy-isovalerate. In the isomerase reaction, S2AL is rearranged via a Mg-dependent methyl migration to produce 3-hydroxy-3-methyl-2-ketobutyrate (HMKB). In the reductase reaction, this 2-ketoacid undergoes a metal-dependent reduction by NADPH to yield (R)-2,3-dihydroxy-isovalerate. In Pyrococcus abyssi (strain GE5 / Orsay), this protein is Ketol-acid reductoisomerase (NADP(+)).